Reading from the N-terminus, the 530-residue chain is Glutamate--cysteine ligase (530 aa).

This sequence belongs to the glutamate--cysteine ligase type 1 family. Type 1 subfamily.

It catalyses the reaction L-cysteine + L-glutamate + ATP = gamma-L-glutamyl-L-cysteine + ADP + phosphate + H(+). It functions in the pathway sulfur metabolism; glutathione biosynthesis; glutathione from L-cysteine and L-glutamate: step 1/2. This Saccharophagus degradans (strain 2-40 / ATCC 43961 / DSM 17024) protein is Glutamate--cysteine ligase.